Reading from the N-terminus, the 138-residue chain is Large ribosomal subunit protein bL17 (138 aa).

It belongs to the bacterial ribosomal protein bL17 family. Part of the 50S ribosomal subunit. Contacts protein L32.

The chain is Large ribosomal subunit protein bL17 from Methylorubrum extorquens (strain CM4 / NCIMB 13688) (Methylobacterium extorquens).